A 118-amino-acid chain; its full sequence is Vitelline membrane protein Vm32E (118 aa).

Residues 1–17 form the signal peptide; that stretch reads MKIVALTLVAFVALAGA. The VM domain maps to 36 to 75; that stretch reads GYPAPPCPTNYLFSCQPNLAPAPCAQEAQAPAYGSAGAYT.

It belongs to the vitelline membrane family.

It localises to the secreted. Its function is as follows. Major early eggshell protein. This is Vitelline membrane protein Vm32E from Drosophila simulans (Fruit fly).